A 315-amino-acid chain; its full sequence is DNA-directed RNA polymerase subunit alpha (315 aa).

The interval 1–228 (MLEIEKPKIE…EHFKLFMTLT (228 aa)) is alpha N-terminal domain (alpha-NTD). The interval 245-315 (KEKVLEMTIE…LGLGLRKSED (71 aa)) is alpha C-terminal domain (alpha-CTD).

It belongs to the RNA polymerase alpha chain family. In terms of assembly, homodimer. The RNAP catalytic core consists of 2 alpha, 1 beta, 1 beta' and 1 omega subunit. When a sigma factor is associated with the core the holoenzyme is formed, which can initiate transcription.

It carries out the reaction RNA(n) + a ribonucleoside 5'-triphosphate = RNA(n+1) + diphosphate. Its function is as follows. DNA-dependent RNA polymerase catalyzes the transcription of DNA into RNA using the four ribonucleoside triphosphates as substrates. This Clostridium botulinum (strain Langeland / NCTC 10281 / Type F) protein is DNA-directed RNA polymerase subunit alpha.